The following is a 511-amino-acid chain: Histidine ammonia-lyase (511 aa).

Positions 142 to 144 (ASG) form a cross-link, 5-imidazolinone (Ala-Gly). S143 carries the 2,3-didehydroalanine (Ser) modification.

This sequence belongs to the PAL/histidase family. In terms of processing, contains an active site 4-methylidene-imidazol-5-one (MIO), which is formed autocatalytically by cyclization and dehydration of residues Ala-Ser-Gly.

It is found in the cytoplasm. The enzyme catalyses L-histidine = trans-urocanate + NH4(+). The protein operates within amino-acid degradation; L-histidine degradation into L-glutamate; N-formimidoyl-L-glutamate from L-histidine: step 1/3. The sequence is that of Histidine ammonia-lyase (hutH) from Rhizobium meliloti (strain 1021) (Ensifer meliloti).